We begin with the raw amino-acid sequence, 255 residues long: Indole-3-glycerol phosphate synthase (255 aa).

It belongs to the TrpC family.

The catalysed reaction is 1-(2-carboxyphenylamino)-1-deoxy-D-ribulose 5-phosphate + H(+) = (1S,2R)-1-C-(indol-3-yl)glycerol 3-phosphate + CO2 + H2O. It participates in amino-acid biosynthesis; L-tryptophan biosynthesis; L-tryptophan from chorismate: step 4/5. The protein is Indole-3-glycerol phosphate synthase of Streptococcus pneumoniae (strain 70585).